The following is a 121-amino-acid chain: Large ribosomal subunit protein uL18 (121 aa).

It belongs to the universal ribosomal protein uL18 family. Part of the 50S ribosomal subunit; part of the 5S rRNA/L5/L18/L25 subcomplex. Contacts the 5S and 23S rRNAs.

Its function is as follows. This is one of the proteins that bind and probably mediate the attachment of the 5S RNA into the large ribosomal subunit, where it forms part of the central protuberance. This chain is Large ribosomal subunit protein uL18, found in Ureaplasma urealyticum serovar 10 (strain ATCC 33699 / Western).